Reading from the N-terminus, the 328-residue chain is D-cysteine desulfhydrase (328 aa).

K51 is modified (N6-(pyridoxal phosphate)lysine).

It belongs to the ACC deaminase/D-cysteine desulfhydrase family. Homodimer. The cofactor is pyridoxal 5'-phosphate.

The catalysed reaction is D-cysteine + H2O = hydrogen sulfide + pyruvate + NH4(+) + H(+). Catalyzes the alpha,beta-elimination reaction of D-cysteine and of several D-cysteine derivatives. It could be a defense mechanism against D-cysteine. This chain is D-cysteine desulfhydrase, found in Escherichia coli (strain UTI89 / UPEC).